A 70-amino-acid polypeptide reads, in one-letter code: Probable non-specific lipid-transfer protein 2 (70 aa).

Intrachain disulfides connect Cys4/Cys38, Cys12/Cys26, Cys27/Cys62, and Cys36/Cys69.

Potential phospholipid transfer protein. This chain is Probable non-specific lipid-transfer protein 2, found in Zea mays (Maize).